An 859-amino-acid polypeptide reads, in one-letter code: Leucine--tRNA ligase (859 aa).

The short motif at 42–52 is the 'HIGH' region element; sequence PYPSGRLHMGH. The 'KMSKS' region motif lies at 618 to 622; sequence KMSKS. Lys-621 provides a ligand contact to ATP.

Belongs to the class-I aminoacyl-tRNA synthetase family.

The protein localises to the cytoplasm. The catalysed reaction is tRNA(Leu) + L-leucine + ATP = L-leucyl-tRNA(Leu) + AMP + diphosphate. The protein is Leucine--tRNA ligase of Shewanella oneidensis (strain ATCC 700550 / JCM 31522 / CIP 106686 / LMG 19005 / NCIMB 14063 / MR-1).